Consider the following 267-residue polypeptide: 3-methyl-2-oxobutanoate hydroxymethyltransferase (267 aa).

Aspartate 45 and aspartate 84 together coordinate Mg(2+). 3-methyl-2-oxobutanoate is bound by residues 45–46 (DS), aspartate 84, and lysine 113. Position 115 (glutamate 115) interacts with Mg(2+). The active-site Proton acceptor is glutamate 182.

The protein belongs to the PanB family. As to quaternary structure, homodecamer; pentamer of dimers. Mg(2+) serves as cofactor.

It is found in the cytoplasm. It carries out the reaction 3-methyl-2-oxobutanoate + (6R)-5,10-methylene-5,6,7,8-tetrahydrofolate + H2O = 2-dehydropantoate + (6S)-5,6,7,8-tetrahydrofolate. Its pathway is cofactor biosynthesis; coenzyme A biosynthesis. Catalyzes the reversible reaction in which hydroxymethyl group from 5,10-methylenetetrahydrofolate is transferred onto alpha-ketoisovalerate to form ketopantoate. The sequence is that of 3-methyl-2-oxobutanoate hydroxymethyltransferase from Saccharolobus islandicus (strain Y.G.57.14 / Yellowstone #1) (Sulfolobus islandicus).